The primary structure comprises 196 residues: Peptide methionine sulfoxide reductase MsrA 2 (196 aa).

The active site involves Cys36.

Belongs to the MsrA Met sulfoxide reductase family.

The catalysed reaction is L-methionyl-[protein] + [thioredoxin]-disulfide + H2O = L-methionyl-(S)-S-oxide-[protein] + [thioredoxin]-dithiol. It catalyses the reaction [thioredoxin]-disulfide + L-methionine + H2O = L-methionine (S)-S-oxide + [thioredoxin]-dithiol. Its function is as follows. Has an important function as a repair enzyme for proteins that have been inactivated by oxidation. Catalyzes the reversible oxidation-reduction of methionine sulfoxide in proteins to methionine. This is Peptide methionine sulfoxide reductase MsrA 2 (msrA2) from Caulobacter vibrioides (strain ATCC 19089 / CIP 103742 / CB 15) (Caulobacter crescentus).